The following is a 186-amino-acid chain: Ribonuclease M5 (186 aa).

The Toprim domain maps to 4–94; that stretch reads KEIIVVEGRD…AKPKNKRGIG (91 aa). Glu-10, Asp-56, and Asp-58 together coordinate Mg(2+).

Belongs to the ribonuclease M5 family. As to quaternary structure, requires ribosomal protein L18 (rplR) for catalysis; it can be replaced by 30% dimethylsulfoxide suggesting L18 functions as an rRNA folding chaperone. The cofactor is Mg(2+). Mn(2+) is required as a cofactor. Requires Ca(2+) as cofactor.

The protein resides in the cytoplasm. It carries out the reaction Endonucleolytic cleavage of RNA, removing 21 and 42 nucleotides, respectively, from the 5'- and 3'-termini of a 5S-rRNA precursor.. Functionally, required for correct processing of both the 5' and 3' ends of 5S rRNA precursor. Cleaves both sides of a double-stranded region yielding mature 5S rRNA in one step. Releases 5'-phosphoryl and 3'-hydroxy termini. In Bacillus subtilis (strain 168), this protein is Ribonuclease M5.